Here is a 493-residue protein sequence, read N- to C-terminus: GTPase Der (493 aa).

One can recognise an EngA-type G 1 domain in the interval 3–166 (PVIALVGRPN…EALGIFPKDN (164 aa)). GTP is bound by residues 9–16 (GRPNVGKS), 56–60 (DTGGI), and 118–121 (NKVD). The disordered stretch occupies residues 166–195 (NAEEEGEGEPASEEVAEGEEPTRIPGPSEK). A compositionally biased stretch (acidic residues) spans 167–184 (AEEEGEGEPASEEVAEGE). Residues 198-371 (IKIAIIGRPN…SVQESFRSAV (174 aa)) enclose the EngA-type G 2 domain. Residues 204–211 (GRPNVGKS), 251–255 (DTAGV), and 316–319 (NKWD) contribute to the GTP site. The region spanning 372-456 (TRWPTSRLTS…PIRIEYKGGE (85 aa)) is the KH-like domain. Over residues 454 to 463 (GGENPYEGKK) the composition is skewed to basic and acidic residues. Residues 454-493 (GGENPYEGKKNSLTARQVNKKRRLMSHHKKAEKKKKDKRR) form a disordered region. Residues 471 to 493 (VNKKRRLMSHHKKAEKKKKDKRR) show a composition bias toward basic residues.

The protein belongs to the TRAFAC class TrmE-Era-EngA-EngB-Septin-like GTPase superfamily. EngA (Der) GTPase family. As to quaternary structure, associates with the 50S ribosomal subunit.

GTPase that plays an essential role in the late steps of ribosome biogenesis. This chain is GTPase Der, found in Pseudomonas aeruginosa (strain ATCC 15692 / DSM 22644 / CIP 104116 / JCM 14847 / LMG 12228 / 1C / PRS 101 / PAO1).